The following is a 505-amino-acid chain: L-amino-acid oxidase (505 aa).

The signal sequence occupies residues 1-18 (MNVFLMFSLLFLAALGSC). Cysteines 28 and 191 form a disulfide. Residues 61-62 (MS), 81-82 (EA), arginine 89, and 105-108 (GPMR) contribute to the FAD site. Arginine 108 is a substrate binding site. A glycan (N-linked (GlcNAc...) asparagine) is linked at asparagine 190. Histidine 241 contacts substrate. Valine 279 serves as a coordination point for FAD. Residues cysteine 349 and cysteine 430 are joined by a disulfide bond. Residue asparagine 379 is glycosylated (N-linked (GlcNAc...) asparagine). Residue tyrosine 390 coordinates substrate. FAD contacts are provided by residues glutamate 475 and 482 to 487 (GWIDST). 482–483 (GW) provides a ligand contact to substrate.

This sequence belongs to the flavin monoamine oxidase family. FIG1 subfamily. In terms of assembly, monomer. This is in contrast with most of its orthologs, that are non-covalently linked homodimers. The cofactor is FAD. N-glycosylated. As to expression, expressed by the venom gland.

It is found in the secreted. The enzyme catalyses an L-alpha-amino acid + O2 + H2O = a 2-oxocarboxylate + H2O2 + NH4(+). The catalysed reaction is L-leucine + O2 + H2O = 4-methyl-2-oxopentanoate + H2O2 + NH4(+). Catalyzes an oxidative deamination of predominantly hydrophobic and aromatic L-amino acids, thus producing hydrogen peroxide that may contribute to the diverse toxic effects of this enzyme. Shows activity on L-Leu. Exhibits diverse biological activities, such as hemorrhage, edema, antibacterial and antiparasitic activities, as well as regulation of platelet aggregation. Effects of snake L-amino oxidases on platelets are controversial, since they either induce aggregation or inhibit agonist-induced aggregation. These different effects are probably due to different experimental conditions. This protein has an ability to induce hemolysis and apoptosis. The protein is L-amino-acid oxidase of Protobothrops flavoviridis (Habu).